A 1130-amino-acid polypeptide reads, in one-letter code: BTB/POZ domain-containing protein 7 (1130 aa).

The span at 1-10 (MGANASNYPH) shows a compositional bias: polar residues. A disordered region spans residues 1–24 (MGANASNYPHSCSPRVGGNSQAQQ). Gly-2 carries the N-myristoyl glycine lipid modification. 2 BTB domains span residues 142–211 (TDVD…GMED) and 247–341 (YDVV…DLSV). The region spanning 413-479 (YGSKWVHRQA…WGEHQLMKRI (67 aa)) is the BACK domain. Phosphoserine is present on Ser-722. Disordered stretches follow at residues 898–1050 (SEAG…PAHV) and 1062–1130 (FGLT…KSAL). 2 stretches are compositionally biased toward basic and acidic residues: residues 923-935 (PTLEQKADGRENQ) and 996-1005 (KKQEDPRREY). Ser-1008 is subject to Phosphoserine. A compositionally biased stretch (polar residues) spans 1063–1075 (GLTSNRPPSHSAC). Basic and acidic residues-rich tracts occupy residues 1080–1090 (LEERSSRRLTD) and 1101–1112 (RNADLERGDSIS).

Specifically expressed in embryonic epithelia.

It localises to the nucleus. Its function is as follows. Acts as a mediator of epithelial dynamics and organ branching by promoting cleft progression. Induced following accumulation of fibronectin in forming clefts, leading to local expression of the cell-scattering SNAIL2 and suppression of E-cadherin levels, thereby altering cell morphology and reducing cell-cell adhesion. This stimulates cell separation at the base of forming clefts by local, dynamic intercellular gap formation and promotes cleft progression. The chain is BTB/POZ domain-containing protein 7 (Btbd7) from Mus musculus (Mouse).